Consider the following 241-residue polypeptide: Carboxy-S-adenosyl-L-methionine synthase (241 aa).

Residues tyrosine 38, 63-65, 88-89, 116-117, asparagine 131, and arginine 198 each bind S-adenosyl-L-methionine; these read GCS, DN, and DI.

It belongs to the class I-like SAM-binding methyltransferase superfamily. Cx-SAM synthase family. Homodimer.

The enzyme catalyses prephenate + S-adenosyl-L-methionine = carboxy-S-adenosyl-L-methionine + 3-phenylpyruvate + H2O. Its function is as follows. Catalyzes the conversion of S-adenosyl-L-methionine (SAM) to carboxy-S-adenosyl-L-methionine (Cx-SAM). In Pseudoalteromonas translucida (strain TAC 125), this protein is Carboxy-S-adenosyl-L-methionine synthase.